Reading from the N-terminus, the 344-residue chain is MIRVGIVGFGTIGKRIADAVAAQGDMHVSGVLKVTPDYEVLVAAAKGFKVYTLPDRVEKFKKAGIEPAGTIEDLIKASDVIIDASPEDVGAENKEKYYSKFDKPVIFQGGEEAEVAEVSFNALANYDEARGRRYVRVVSCNTTGITRVLTSLMLNGVGIKKARIFIARRGADPKEYKKGPINDVVPNPATVPSHHGPDVKTVLKNVDIVTMAVAVPVTIMHMHMAFLELDGAYPRDAVLEALAKTPRIFLADVGAGFQSLAQIIEYARDLGRPRGDFPEVAIFRDSVTVNGNELYLMYGVHQESIVVPENVDAVRAVLGAMPKWESIKKTDTTLKLFTEGKRYG.

NAD(+)-binding positions include 11–12 and glycine 110; that span reads TI. Residue 139 to 141 coordinates D-glyceraldehyde 3-phosphate; sequence SCN. Catalysis depends on cysteine 140, which acts as the Nucleophile. Arginine 169 serves as a coordination point for NAD(+). 195–196 serves as a coordination point for D-glyceraldehyde 3-phosphate; it reads HG. Glutamine 302 is an NAD(+) binding site.

The protein belongs to the glyceraldehyde-3-phosphate dehydrogenase family. As to quaternary structure, homotetramer.

The protein localises to the cytoplasm. It carries out the reaction D-glyceraldehyde 3-phosphate + phosphate + NADP(+) = (2R)-3-phospho-glyceroyl phosphate + NADPH + H(+). It catalyses the reaction D-glyceraldehyde 3-phosphate + phosphate + NAD(+) = (2R)-3-phospho-glyceroyl phosphate + NADH + H(+). The protein operates within carbohydrate degradation; glycolysis; pyruvate from D-glyceraldehyde 3-phosphate: step 1/5. The sequence is that of Glyceraldehyde-3-phosphate dehydrogenase from Pyrobaculum arsenaticum (strain DSM 13514 / JCM 11321 / PZ6).